The following is a 227-amino-acid chain: Cytidylate kinase (227 aa).

12-20 (GPGGAGKGT) is a binding site for ATP.

This sequence belongs to the cytidylate kinase family. Type 1 subfamily.

The protein localises to the cytoplasm. The catalysed reaction is CMP + ATP = CDP + ADP. It carries out the reaction dCMP + ATP = dCDP + ADP. This is Cytidylate kinase from Klebsiella pneumoniae (strain 342).